A 146-amino-acid polypeptide reads, in one-letter code: Hemoglobin cathodic subunit beta (146 aa).

Positions 2-146 (HFSDAERDAI…VAAALSSRYF (145 aa)) constitute a Globin domain. Residues histidine 63 and histidine 92 each contribute to the heme b site.

The protein belongs to the globin family. Heterotetramer of two alpha chains and two beta chains. In terms of tissue distribution, red blood cells.

Involved in oxygen transport from gills to the various peripheral tissues. This chain is Hemoglobin cathodic subunit beta (hbb), found in Hoplosternum littorale (Hassar).